The following is a 427-amino-acid chain: Serine--tRNA ligase (427 aa).

L-serine is bound at residue 230-232 (TAE). ATP is bound at residue 261–263 (RAE). Glutamate 284 is a binding site for L-serine. 348–351 (EISS) is an ATP binding site. Serine 384 contributes to the L-serine binding site.

This sequence belongs to the class-II aminoacyl-tRNA synthetase family. Type-1 seryl-tRNA synthetase subfamily. In terms of assembly, homodimer. The tRNA molecule binds across the dimer.

Its subcellular location is the cytoplasm. It carries out the reaction tRNA(Ser) + L-serine + ATP = L-seryl-tRNA(Ser) + AMP + diphosphate + H(+). It catalyses the reaction tRNA(Sec) + L-serine + ATP = L-seryl-tRNA(Sec) + AMP + diphosphate + H(+). It functions in the pathway aminoacyl-tRNA biosynthesis; selenocysteinyl-tRNA(Sec) biosynthesis; L-seryl-tRNA(Sec) from L-serine and tRNA(Sec): step 1/1. Its function is as follows. Catalyzes the attachment of serine to tRNA(Ser). Is also able to aminoacylate tRNA(Sec) with serine, to form the misacylated tRNA L-seryl-tRNA(Sec), which will be further converted into selenocysteinyl-tRNA(Sec). In Syntrophomonas wolfei subsp. wolfei (strain DSM 2245B / Goettingen), this protein is Serine--tRNA ligase.